The primary structure comprises 428 residues: CRS2-associated factor 1, mitochondrial (428 aa).

A mitochondrion-targeting transit peptide spans Met1–Arg21. 2 disordered regions span residues Pro33–Lys100 and His129–Val152. 2 consecutive CRM domains span residues Glu155–Val253 and Glu275–Asn371. Residues Ser378–Asp428 are disordered. Over residues Leu380–Asp393 the composition is skewed to acidic residues. Residues Gln394–Asp413 show a composition bias toward polar residues.

Part of large ribonucleo-protein complexes that include group IIB introns.

Its subcellular location is the mitochondrion. In terms of biological role, may be involved in the splicing of group IIB introns in mitochondria. The polypeptide is CRS2-associated factor 1, mitochondrial (Oryza sativa subsp. japonica (Rice)).